The following is a 297-amino-acid chain: MADKLVKATAKNGDVRIIAAITTDMVNEGVKTHKCAPTAAAALGRMLTAGVLMGAQLKAESDSITLKINGGGIAKSVTVTSYSDAHVKGYIANPNADLPVNSQGKLDVGGIIGKNGNLLVIRDMGLKEPYVGQVPIYTGEIGDDIAYYYVNSEQTPSAVGLGVLVDKDLSIKASGGFIIQMMPGADDLVADLITYRLQEIPSITDLIAKGMSVEDILEFIFEDMDLKILDEGIVPEYRCDCSRDRVEKALISIGMKDLKEIYDDGKQEEVVCNFCNKKYVFTNDEVGSLIKRLENNK.

Intrachain disulfides connect C239–C241 and C272–C275.

This sequence belongs to the HSP33 family. Under oxidizing conditions two disulfide bonds are formed involving the reactive cysteines. Under reducing conditions zinc is bound to the reactive cysteines and the protein is inactive.

The protein localises to the cytoplasm. Its function is as follows. Redox regulated molecular chaperone. Protects both thermally unfolding and oxidatively damaged proteins from irreversible aggregation. Plays an important role in the bacterial defense system toward oxidative stress. This chain is 33 kDa chaperonin, found in Clostridium acetobutylicum (strain ATCC 824 / DSM 792 / JCM 1419 / IAM 19013 / LMG 5710 / NBRC 13948 / NRRL B-527 / VKM B-1787 / 2291 / W).